The following is a 198-amino-acid chain: Cyclin-dependent kinase inhibitor 1B (198 aa).

The span at Met1–Pro11 shows a compositional bias: polar residues. The disordered stretch occupies residues Met1–Gly34. Ser10 is subject to Phosphoserine; by UHMK1. The span at Glu14 to Lys25 shows a compositional bias: basic and acidic residues. The interaction with CDK2 stretch occupies residues Asp51–Pro91. Tyr74 is subject to Phosphotyrosine; by SRC. Residues Pro85–Thr198 form a disordered region. Tyr88 carries the post-translational modification Phosphotyrosine; by ABL, LYN and SRC. Tyr89 carries the post-translational modification Phosphotyrosine. Residues Gln104–Tyr124 are compositionally biased toward polar residues. Positions Lys153 to Arg169 match the Nuclear localization signal motif. Thr170 is modified (phosphothreonine). A compositionally biased stretch (polar residues) spans Ser175–Gln186. Thr187 bears the Phosphothreonine; by PKB/AKT1, CDK1 and CDK2 mark. Thr198 bears the Phosphothreonine; by CaMK1, PKB/AKT1, RPS6KA1, RPS6KA3 and PIM1 mark.

It belongs to the CDI family. As to quaternary structure, forms a ternary complex composed of CCNE1, CDK2 and CDKN1B. Interacts directly with CCNE1; the interaction is inhibited by CDK2-dependent phosphorylation on Thr-187. Interacts with COPS5, subunit of the COP9 signalosome complex; the interaction leads to CDKN1B degradation. Interacts with NUP50; the interaction leads to nuclear import and degradation of phosphorylated CDKN1B. Interacts with CCND1 and SNX6. Interacts (Thr-198-phosphorylated form) with 14-3-3 proteins, binds strongly YWHAQ, weakly YWHAE and YWHAH, but not YWHAB nor YWHAZ; the interaction with YWHAQ results in translocation to the cytoplasm. Interacts with AKT1 and LYN; the interactions lead to cytoplasmic mislocation, phosphorylation of CDKN1B and inhibition of cell cycle arrest. Forms a ternary complex with CCNA2 and CDK2; CDKN1B inhibits the kinase activity of CDK2 through conformational rearrangements. Interacts (unphosphorylated form) with CDK2. Forms a complex with CDK2 and SPDYA, but does not directly interact with SPDYA. Forms a ternary complex composed of cyclin D, CDK4 and CDKN1B. Interacts (phosphorylated on Tyr-88 and Tyr-89) with CDK4; the interaction is required for cyclin D and CDK4 complex assembly, induces nuclear translocation and activates the CDK4 kinase activity. Interacts with GRB2. Interacts with PIM1. Identified in a complex with SKP1, SKP2 and CKS1B. Interacts with UHMK1; the interaction leads to cytoplasmic mislocation, phosphorylation of CDKN1B and inhibition of cell cycle arrest. Also interacts with CDK1. Dephosphorylated on Thr-187 by PPM1H, leading to CDKN1B stability. Phosphorylated; phosphorylation occurs on serine, threonine and tyrosine residues. Phosphorylation on Ser-10 is the major site of phosphorylation in resting cells, takes place at the G(0)-G(1) phase and leads to protein stability. Phosphorylation on other sites is greatly enhanced by mitogens, growth factors, cMYC and in certain cancer cell lines. The phosphorylated form found in the cytoplasm is inactivate. Phosphorylation on Thr-198 is required for interaction with 14-3-3 proteins. Phosphorylation on Thr-187, by CDK1 and CDK2 leads to protein ubiquitination and proteasomal degradation. Tyrosine phosphorylation promotes this process. Phosphorylation by PKB/AKT1 can be suppressed by LY294002, an inhibitor of the catalytic subunit of PI3K. Phosphorylation on Tyr-88 and Tyr-89 has no effect on binding CDK2, but is required for binding CDK4. Dephosphorylated on tyrosine residues by G-CSF. Dephosphorylated on Thr-187 by PPM1H, leading to CDKN1B stability. In terms of processing, ubiquitinated; in the cytoplasm by the KPC complex (composed of RNF123/KPC1 and UBAC1/KPC2) and, in the nucleus, by SCF(SKP2). The latter requires prior phosphorylation on Thr-187. Ubiquitinated; by a TRIM21-containing SCF(SKP2)-like complex; leads to its degradation. Post-translationally, subject to degradation in the lysosome. Interaction with SNX6 promotes lysosomal degradation.

It is found in the nucleus. Its subcellular location is the cytoplasm. The protein resides in the endosome. Important regulator of cell cycle progression. Inhibits the kinase activity of CDK2 bound to cyclin A, but has little inhibitory activity on CDK2 bound to SPDYA. Involved in G1 arrest. Potent inhibitor of cyclin E- and cyclin A-CDK2 complexes. Forms a complex with cyclin type D-CDK4 complexes and is involved in the assembly, stability, and modulation of CCND1-CDK4 complex activation. Acts either as an inhibitor or an activator of cyclin type D-CDK4 complexes depending on its phosphorylation state and/or stoichometry. The chain is Cyclin-dependent kinase inhibitor 1B (CDKN1B) from Cricetulus griseus (Chinese hamster).